The primary structure comprises 247 residues: Nodulation protein H (247 aa).

The interval methionine 1–methionine 16 is hydrophobic.

Required for the formation of sulfated nod factor. Proposed to transfer activated sulfate (PAPS) to a N-acetylglucosamine of the nod factor. The protein is Nodulation protein H (nodH) of Rhizobium meliloti (Ensifer meliloti).